The sequence spans 567 residues: Urease subunit alpha (567 aa).

The 439-residue stretch at 129–567 (GGIDSHIHFI…LPLAQRYFLF (439 aa)) folds into the Urease domain. Residues His134, His136, and Lys217 each contribute to the Ni(2+) site. N6-carboxylysine is present on Lys217. His219 contacts substrate. Ni(2+)-binding residues include His246 and His272. The active-site Proton donor is the His320. A Ni(2+)-binding site is contributed by Asp360.

The protein belongs to the metallo-dependent hydrolases superfamily. Urease alpha subunit family. In terms of assembly, heterotrimer of UreA (gamma), UreB (beta) and UreC (alpha) subunits. Three heterotrimers associate to form the active enzyme. It depends on Ni cation as a cofactor. In terms of processing, carboxylation allows a single lysine to coordinate two nickel ions.

It is found in the cytoplasm. It carries out the reaction urea + 2 H2O + H(+) = hydrogencarbonate + 2 NH4(+). The protein operates within nitrogen metabolism; urea degradation; CO(2) and NH(3) from urea (urease route): step 1/1. This is Urease subunit alpha from Pseudomonas entomophila (strain L48).